The sequence spans 359 residues: Probable RNA methyltransferase RPD_2859 (359 aa).

E99 functions as the Proton acceptor in the catalytic mechanism. The Radical SAM core domain occupies 105-330 (RFDGHTACIS…PVVVRDTQGR (226 aa)). C112 and C336 are disulfide-bonded. The [4Fe-4S] cluster site is built by C119, C123, and C126. Residues 162 to 163 (GE), S194, 217 to 219 (SLH), and N293 contribute to the S-adenosyl-L-methionine site. C336 (S-methylcysteine intermediate) is an active-site residue.

It belongs to the radical SAM superfamily. RlmN family. [4Fe-4S] cluster serves as cofactor.

It is found in the cytoplasm. The protein is Probable RNA methyltransferase RPD_2859 of Rhodopseudomonas palustris (strain BisB5).